Reading from the N-terminus, the 250-residue chain is Probable transcriptional regulatory protein SCO1521 (250 aa).

Belongs to the TACO1 family.

It localises to the cytoplasm. The protein is Probable transcriptional regulatory protein SCO1521 of Streptomyces coelicolor (strain ATCC BAA-471 / A3(2) / M145).